We begin with the raw amino-acid sequence, 140 residues long: Endoribonuclease YbeY (140 aa).

Residues histidine 100, histidine 104, and histidine 110 each coordinate Zn(2+).

Belongs to the endoribonuclease YbeY family. Zn(2+) is required as a cofactor.

It localises to the cytoplasm. In terms of biological role, single strand-specific metallo-endoribonuclease involved in late-stage 70S ribosome quality control and in maturation of the 3' terminus of the 16S rRNA. This chain is Endoribonuclease YbeY, found in Helicobacter pylori (strain ATCC 700392 / 26695) (Campylobacter pylori).